The sequence spans 62 residues: Photosystem II reaction center protein Z (62 aa).

2 helical membrane passes run 8-28 (AVFALIATSLILLISVPVVFA) and 41-61 (FSGTSLWIGLVFLVGILNSLI).

The protein belongs to the PsbZ family. As to quaternary structure, PSII is composed of 1 copy each of membrane proteins PsbA, PsbB, PsbC, PsbD, PsbE, PsbF, PsbH, PsbI, PsbJ, PsbK, PsbL, PsbM, PsbT, PsbY, PsbZ, Psb30/Ycf12, at least 3 peripheral proteins of the oxygen-evolving complex and a large number of cofactors. It forms dimeric complexes.

The protein resides in the plastid. It is found in the chloroplast thylakoid membrane. Its function is as follows. May control the interaction of photosystem II (PSII) cores with the light-harvesting antenna, regulates electron flow through the 2 photosystem reaction centers. PSII is a light-driven water plastoquinone oxidoreductase, using light energy to abstract electrons from H(2)O, generating a proton gradient subsequently used for ATP formation. The protein is Photosystem II reaction center protein Z of Nicotiana sylvestris (Wood tobacco).